A 605-amino-acid polypeptide reads, in one-letter code: Beta-hexosaminidase ARB_07893 (605 aa).

Residues 1–18 (MLWIWVPGILGLFGRVEA) form the signal peptide. N-linked (GlcNAc...) asparagine glycosylation occurs at Asn30. Glu293 acts as the Nucleophile in catalysis. Residue Asn342 is glycosylated (N-linked (GlcNAc...) asparagine). Catalysis depends on Glu374, which acts as the Proton donor. A glycan (N-linked (GlcNAc...) asparagine) is linked at Asn449.

The protein belongs to the glycosyl hydrolase 20 family.

It is found in the secreted. The enzyme catalyses Hydrolysis of terminal non-reducing N-acetyl-D-hexosamine residues in N-acetyl-beta-D-hexosaminides.. Its function is as follows. Beta-hexosaminidase that shows a broad substrate specificity. This chain is Beta-hexosaminidase ARB_07893, found in Arthroderma benhamiae (strain ATCC MYA-4681 / CBS 112371) (Trichophyton mentagrophytes).